The sequence spans 433 residues: Serine hydroxymethyltransferase (433 aa).

Residues Leu-132 and 136 to 138 each bind (6S)-5,6,7,8-tetrahydrofolate; that span reads GHL. Lys-241 bears the N6-(pyridoxal phosphate)lysine mark.

The protein belongs to the SHMT family. Homodimer. Pyridoxal 5'-phosphate is required as a cofactor.

Its subcellular location is the cytoplasm. It catalyses the reaction (6R)-5,10-methylene-5,6,7,8-tetrahydrofolate + glycine + H2O = (6S)-5,6,7,8-tetrahydrofolate + L-serine. Its pathway is one-carbon metabolism; tetrahydrofolate interconversion. It participates in amino-acid biosynthesis; glycine biosynthesis; glycine from L-serine: step 1/1. Functionally, catalyzes the reversible interconversion of serine and glycine with tetrahydrofolate (THF) serving as the one-carbon carrier. This reaction serves as the major source of one-carbon groups required for the biosynthesis of purines, thymidylate, methionine, and other important biomolecules. Also exhibits THF-independent aldolase activity toward beta-hydroxyamino acids, producing glycine and aldehydes, via a retro-aldol mechanism. In Bradyrhizobium sp. (strain ORS 278), this protein is Serine hydroxymethyltransferase.